Consider the following 446-residue polypeptide: Tubulin beta-8 chain (446 aa).

GTP is bound by residues Q11, E69, S138, G142, T143, G144, N204, and N226. Residue E69 participates in Mg(2+) binding. The tract at residues 426–446 (QDATAEDDYDEDDDAAAADEA) is disordered. A compositionally biased stretch (acidic residues) spans 429-446 (TAEDDYDEDDDAAAADEA).

The protein belongs to the tubulin family. In terms of assembly, dimer of alpha and beta chains. A typical microtubule is a hollow water-filled tube with an outer diameter of 25 nm and an inner diameter of 15 nM. Alpha-beta heterodimers associate head-to-tail to form protofilaments running lengthwise along the microtubule wall with the beta-tubulin subunit facing the microtubule plus end conferring a structural polarity. Microtubules usually have 13 protofilaments but different protofilament numbers can be found in some organisms and specialized cells. Mg(2+) is required as a cofactor. As to expression, expressed in anthers.

The protein localises to the cytoplasm. It is found in the cytoskeleton. Functionally, tubulin is the major constituent of microtubules, a cylinder consisting of laterally associated linear protofilaments composed of alpha- and beta-tubulin heterodimers. Microtubules grow by the addition of GTP-tubulin dimers to the microtubule end, where a stabilizing cap forms. Below the cap, tubulin dimers are in GDP-bound state, owing to GTPase activity of alpha-tubulin. This Oryza sativa subsp. japonica (Rice) protein is Tubulin beta-8 chain (TUBB8).